A 555-amino-acid chain; its full sequence is Capsid vertex component 2 (555 aa).

The segment at 1 to 47 is interaction with major capsid protein/MCP; that stretch reads MAQCNLFYQYPITPILEGHVRNILICTEKDVEKLQSQSSLRLREKID.

It belongs to the herpesviridae CVC2 protein family. As to quaternary structure, heterodimerizes with CVC1. Interacts with major capsid protein/MCP and triplex capsid protein 1/TRX1 at the pentamer vertices. Interacts with the large tegument protein/LTP.

It localises to the virion. It is found in the host nucleus. Capsid vertex-specific component that plays a role during viral DNA encapsidation, assuring correct genome cleavage and presumably stabilizing capsids that contain full-length viral genomes. Participates in the interaction between the capsid and the tegument through interaction with the large tegument protein/LTP. This chain is Capsid vertex component 2, found in Homo sapiens (Human).